Consider the following 585-residue polypeptide: L-gulonolactone oxidase 3 (585 aa).

The signal sequence occupies residues 1-24 (MRYSHTLQQFSILSFFVTIWTVQS). Residues 51-233 (KTCHAANVTY…SKVKLSIEKA (183 aa)) enclose the FAD-binding PCMH-type domain.

This sequence belongs to the oxygen-dependent FAD-linked oxidoreductase family. FAD is required as a cofactor.

The protein resides in the vacuole. The enzyme catalyses L-gulono-1,4-lactone + O2 = L-ascorbate + H2O2 + H(+). It functions in the pathway cofactor biosynthesis; L-ascorbate biosynthesis. Its function is as follows. Catalyzes the oxidation of L-gulono-1,4-lactone to ascorbic acid. L-gulono-1,4-lactone is oxidized to hydrogen peroxide and L-xylo-hexulonolactone which spontaneously isomerizes to L-ascorbate. The polypeptide is L-gulonolactone oxidase 3 (Arabidopsis thaliana (Mouse-ear cress)).